Consider the following 260-residue polypeptide: Uroplakin-1b (260 aa).

The Cytoplasmic segment spans residues A2–L15. The helical transmembrane segment at I16–F36 threads the bilayer. The Extracellular segment spans residues V37 to W60. Residues I61 to M81 form a helical membrane-spanning segment. Over K82 to K86 the chain is Cytoplasmic. Residues I87–I107 traverse the membrane as a helical segment. Residues T108–H229 lie on the Extracellular side of the membrane. A helical membrane pass occupies residues A230–G250. Over T251–Y260 the chain is Cytoplasmic.

It belongs to the tetraspanin (TM4SF) family. Heterodimer with uroplakin-3A (UPK3A) or uroplakin-3B (UPK3B). N-glycosylated with high-mannose oligosaccharides. As to expression, bladder epithelium.

It is found in the membrane. Functionally, component of the asymmetric unit membrane (AUM); a highly specialized biomembrane elaborated by terminally differentiated urothelial cells. May play an important role in normal bladder epithelial physiology, possibly in regulating membrane permeability of superficial umbrella cells or in stabilizing the apical membrane through AUM/cytoskeletal interactions. This Bos taurus (Bovine) protein is Uroplakin-1b (UPK1B).